The following is a 362-amino-acid chain: Cobalt-precorrin-5B C(1)-methyltransferase (362 aa).

The protein belongs to the CbiD family.

It catalyses the reaction Co-precorrin-5B + S-adenosyl-L-methionine = Co-precorrin-6A + S-adenosyl-L-homocysteine. Its pathway is cofactor biosynthesis; adenosylcobalamin biosynthesis; cob(II)yrinate a,c-diamide from sirohydrochlorin (anaerobic route): step 6/10. Functionally, catalyzes the methylation of C-1 in cobalt-precorrin-5B to form cobalt-precorrin-6A. This chain is Cobalt-precorrin-5B C(1)-methyltransferase, found in Burkholderia multivorans (strain ATCC 17616 / 249).